The chain runs to 372 residues: MPLPDFHVSEPFTLGIELEMQVVNPPGYDLSQDSSMLIDAVKNKITAGEVKHDITESMLELATDVCRDINQAAGQFSAMQKVVLQAATDHHLEICGGGTHPFQKWQRQEVCDNERYQRTLENFGYLIQQATVFGQHVHVGCASGDDAIYLLHGLSRFVPHFIALSAASPYMQGTDTRFASSRPNIFSAFPDNGPMPWVSNWQQFEALFRCLSYTTMIDSIKDLHWDIRPSPHFGTVEVRVMDTPLTLSHAVNMAGLIQATAHWLLTERPFKHQEKDYLLYKFNRFQACRYGLEGVITDPHTGDRRPLTEDTLRLLEKIAPSAHKIGASSAIEALHRQVVSGLNEAQLMRDFVADGGSLIGLVKKHCEIWAGD.

This sequence belongs to the glutamate--cysteine ligase type 2 family. YbdK subfamily. Homodimer.

It carries out the reaction L-cysteine + L-glutamate + ATP = gamma-L-glutamyl-L-cysteine + ADP + phosphate + H(+). Its function is as follows. ATP-dependent carboxylate-amine ligase which exhibits weak glutamate--cysteine ligase activity. The polypeptide is Putative glutamate--cysteine ligase 2 (ybdK) (Escherichia coli (strain K12 / MC4100 / BW2952)).